Here is a 454-residue protein sequence, read N- to C-terminus: Maintenance of mitochondrial morphology protein 1 (454 aa).

The Lumenal segment spans residues 1 to 128 (MSMVIGIGDL…QSSGWGFAHG (128 aa)). The helical transmembrane segment at 129-149 (LLVGQLSVVAVLAFFIKFFIF) threads the bilayer. Residues 150–454 (GNSSMARPLM…SESETAVDSN (305 aa)) lie on the Cytoplasmic side of the membrane. The SMP-LTD domain maps to 207–430 (QSESLDWFNV…EPRFQLIELP (224 aa)).

It belongs to the MMM1 family. As to quaternary structure, homodimer. Component of the ER-mitochondria encounter structure (ERMES) or MDM complex, composed of MMM1, MDM10, MDM12 and MDM34. An MMM1 homodimer associates with one molecule of MDM12 on each side in a pairwise head-to-tail manner, and the SMP-LTD domains of MMM1 and MDM12 generate a continuous hydrophobic tunnel for phospholipid trafficking.

It is found in the endoplasmic reticulum membrane. Functionally, component of the ERMES/MDM complex, which serves as a molecular tether to connect the endoplasmic reticulum (ER) and mitochondria. Components of this complex are involved in the control of mitochondrial shape and protein biogenesis, and function in nonvesicular lipid trafficking between the ER and mitochondria. The MDM12-MMM1 subcomplex functions in the major beta-barrel assembly pathway that is responsible for biogenesis of all outer membrane beta-barrel proteins, and acts in a late step after the SAM complex. The MDM10-MDM12-MMM1 subcomplex further acts in the TOM40-specific pathway after the action of the MDM12-MMM1 complex. Essential for establishing and maintaining the structure of mitochondria and maintenance of mtDNA nucleoids. The sequence is that of Maintenance of mitochondrial morphology protein 1 from Komagataella phaffii (strain GS115 / ATCC 20864) (Yeast).